A 283-amino-acid polypeptide reads, in one-letter code: Prolyl 4-hydroxylase 1 (283 aa).

Over 1–6 (MAPAMK) the chain is Cytoplasmic. A helical; Signal-anchor for type II membrane protein membrane pass occupies residues 7–27 (IVFGLLTFVTVGMVIGSLLQL). Residues 28–283 (AFINRLEDSY…TKWMRQKATS (256 aa)) lie on the Lumenal side of the membrane. Residues 162-279 (NGELIQVLRY…KWSATKWMRQ (118 aa)) form the Fe2OG dioxygenase domain. 3 residues coordinate Fe cation: His-180, Asp-182, and His-260. Lys-270 provides a ligand contact to 2-oxoglutarate.

Belongs to the P4HA family. It depends on Fe(2+) as a cofactor. L-ascorbate is required as a cofactor.

It is found in the endoplasmic reticulum membrane. The enzyme catalyses L-prolyl-[collagen] + 2-oxoglutarate + O2 = trans-4-hydroxy-L-prolyl-[collagen] + succinate + CO2. Catalyzes the post-translational formation of 4-hydroxyproline in -Xaa-Pro-Gly- sequences in proline-rich peptide sequences of plant glycoproteins and other proteins. Hydroxylates preferentially prolines in second positions in the -Pro-Pro-Gly-triplets. Hydroxyprolines are important constituent of many plant cell wall glycoproteins such as extensins, hydroxyproline-rich glycoproteins, lectins and arabinogalactan proteins. Can hydroxylate collagen-like peptides and hypoxia-inducible transcription factor peptides. The sequence is that of Prolyl 4-hydroxylase 1 from Arabidopsis thaliana (Mouse-ear cress).